The following is a 182-amino-acid chain: Regulatory protein RecX (182 aa).

The interval 12 to 54 is disordered; sequence LSQRDHSESELRRKLAAPPFSAKGNWGKRSGAKSSNLVESNPV. Basic and acidic residues predominate over residues 13–24; that stretch reads SQRDHSESELRR. Positions 43–54 are enriched in polar residues; sequence AKSSNLVESNPV.

This sequence belongs to the RecX family.

The protein localises to the cytoplasm. In terms of biological role, modulates RecA activity. This chain is Regulatory protein RecX, found in Yersinia pseudotuberculosis serotype I (strain IP32953).